The chain runs to 109 residues: Flagellar hook-basal body complex protein FliE (109 aa).

The protein belongs to the FliE family.

It is found in the bacterial flagellum basal body. The polypeptide is Flagellar hook-basal body complex protein FliE (Nitrosomonas eutropha (strain DSM 101675 / C91 / Nm57)).